The sequence spans 318 residues: Protease HtpX homolog (318 aa).

The next 2 membrane-spanning stretches (helical) occupy residues 6–26 (TAML…LIGG) and 28–48 (GGMM…YWNS). Residue H130 coordinates Zn(2+). The active site involves E131. H134 contacts Zn(2+). The next 2 helical transmembrane spans lie at 145–165 (ITAT…FFGG) and 173–193 (PLGF…AMLV). Position 202 (E202) interacts with Zn(2+). The tract at residues 284–318 (NVSTGPVRAVNPTRKSRSVPNTGRGGSQPPRGPWS) is disordered.

It belongs to the peptidase M48B family. Zn(2+) serves as cofactor.

The protein resides in the cell inner membrane. The sequence is that of Protease HtpX homolog from Rhizobium etli (strain ATCC 51251 / DSM 11541 / JCM 21823 / NBRC 15573 / CFN 42).